A 1649-amino-acid polypeptide reads, in one-letter code: DNA-directed RNA polymerase subunit beta' (1649 aa).

The Zn(2+) site is built by C62, C64, C77, and C80. Residues D746, D748, and D750 each coordinate Mg(2+). Residues C1077, C1268, C1275, and C1278 each contribute to the Zn(2+) site.

The protein belongs to the RNA polymerase beta' chain family. In terms of assembly, the RNAP catalytic core consists of 2 alpha, 1 beta, 1 beta' and 1 omega subunit. When a sigma factor is associated with the core the holoenzyme is formed, which can initiate transcription. Requires Mg(2+) as cofactor. Zn(2+) serves as cofactor.

It catalyses the reaction RNA(n) + a ribonucleoside 5'-triphosphate = RNA(n+1) + diphosphate. DNA-dependent RNA polymerase catalyzes the transcription of DNA into RNA using the four ribonucleoside triphosphates as substrates. The protein is DNA-directed RNA polymerase subunit beta' of Thermosipho africanus (strain TCF52B).